The chain runs to 200 residues: Imidazoleglycerol-phosphate dehydratase (200 aa).

This sequence belongs to the imidazoleglycerol-phosphate dehydratase family.

It localises to the cytoplasm. It carries out the reaction D-erythro-1-(imidazol-4-yl)glycerol 3-phosphate = 3-(imidazol-4-yl)-2-oxopropyl phosphate + H2O. It participates in amino-acid biosynthesis; L-histidine biosynthesis; L-histidine from 5-phospho-alpha-D-ribose 1-diphosphate: step 6/9. This chain is Imidazoleglycerol-phosphate dehydratase, found in Chlorobium luteolum (strain DSM 273 / BCRC 81028 / 2530) (Pelodictyon luteolum).